We begin with the raw amino-acid sequence, 411 residues long: Adenylosuccinate synthetase (411 aa).

GTP-binding positions include 11–17 (GDEGKGK) and 39–41 (GHT). The active-site Proton acceptor is Asp12. Asp12 and Gly39 together coordinate Mg(2+). Residues 12 to 15 (DEGK), 37 to 40 (NAGH), Thr121, Arg135, Gln215, Thr230, and Arg294 contribute to the IMP site. His40 serves as the catalytic Proton donor. 290–296 (TTTKRPR) serves as a coordination point for substrate. GTP contacts are provided by residues Arg296, 322 to 324 (KLD), and 400 to 402 (STS).

This sequence belongs to the adenylosuccinate synthetase family. As to quaternary structure, homodimer. It depends on Mg(2+) as a cofactor.

The protein resides in the cytoplasm. The enzyme catalyses IMP + L-aspartate + GTP = N(6)-(1,2-dicarboxyethyl)-AMP + GDP + phosphate + 2 H(+). The protein operates within purine metabolism; AMP biosynthesis via de novo pathway; AMP from IMP: step 1/2. Functionally, plays an important role in the de novo pathway of purine nucleotide biosynthesis. Catalyzes the first committed step in the biosynthesis of AMP from IMP. In Helicobacter acinonychis (strain Sheeba), this protein is Adenylosuccinate synthetase.